Consider the following 178-residue polypeptide: Co-chaperone protein p23-1 (178 aa).

Residues serine 2–threonine 91 enclose the CS domain. 2 stretches are compositionally biased toward acidic residues: residues aspartate 112–aspartate 126 and aspartate 136–threonine 155. Residues aspartate 112–aspartate 178 are disordered. The span at alanine 157–aspartate 178 shows a compositional bias: basic and acidic residues.

This sequence belongs to the p23/wos2 family. Interacts with HSP90 in an ATP-dependent manner.

Functionally, acts as a co-chaperone for HSP90. The protein is Co-chaperone protein p23-1 of Brassica napus (Rape).